We begin with the raw amino-acid sequence, 200 residues long: Probable molybdenum cofactor guanylyltransferase (200 aa).

Residues Leu-9–Gly-11, Lys-21, Asp-69, and Asp-100 contribute to the GTP site. Residue Asp-100 coordinates Mg(2+).

Belongs to the MobA family. Mg(2+) is required as a cofactor.

The protein localises to the cytoplasm. It catalyses the reaction Mo-molybdopterin + GTP + H(+) = Mo-molybdopterin guanine dinucleotide + diphosphate. Transfers a GMP moiety from GTP to Mo-molybdopterin (Mo-MPT) cofactor (Moco or molybdenum cofactor) to form Mo-molybdopterin guanine dinucleotide (Mo-MGD) cofactor. This is Probable molybdenum cofactor guanylyltransferase from Bacillus anthracis (strain CDC 684 / NRRL 3495).